A 427-amino-acid chain; its full sequence is Enolase (427 aa).

Gln163 is a (2R)-2-phosphoglycerate binding site. The Proton donor role is filled by Glu205. Mg(2+) is bound by residues Asp242, Glu285, and Asp312. The (2R)-2-phosphoglycerate site is built by Lys337, Arg366, Ser367, and Lys388. Catalysis depends on Lys337, which acts as the Proton acceptor.

It belongs to the enolase family. Mg(2+) serves as cofactor.

Its subcellular location is the cytoplasm. It is found in the secreted. It localises to the cell surface. It carries out the reaction (2R)-2-phosphoglycerate = phosphoenolpyruvate + H2O. The protein operates within carbohydrate degradation; glycolysis; pyruvate from D-glyceraldehyde 3-phosphate: step 4/5. In terms of biological role, catalyzes the reversible conversion of 2-phosphoglycerate (2-PG) into phosphoenolpyruvate (PEP). It is essential for the degradation of carbohydrates via glycolysis. This chain is Enolase, found in Burkholderia ambifaria (strain MC40-6).